Consider the following 166-residue polypeptide: MAPKKAKKRIEGGSSNVFSMFEQTQIQEFKEAFTIMDQNRDGFIDKNDLRDTFAALGRVNVKNEEIDEMIKEAPGPINFTVFLTMFGEKLKGADPEETILNAFKVFDPEGKGSLKADYVREMLTTQAERFSKEEIDQMFAAFPPDVTGNLDYKNLVHIITHGEEKD.

Position 2 is a n,N,N-trimethylalanine (Ala2). A phosphoserine; by MLCK mark is found at Ser14 and Ser15. The residue at position 19 (Ser19) is a Phosphoserine. EF-hand domains lie at 24-59 (TQIQ…LGRV), 94-129 (DPEE…QAER), and 130-165 (FSKE…GEEK). 4 residues coordinate Ca(2+): Asp37, Asn39, Asp41, and Asp48. At Thr52 the chain carries Phosphothreonine.

Myosin is a hexamer of 2 heavy chains and 4 light chains. Interacts with MYOC. In terms of processing, N-terminus is methylated by METTL11A/NTM1. Phosphorylated by MYLK3 and MYLK2; promotes cardiac muscle contraction and function. Dephosphorylated by PPP1CB complexed to PPP1R12B. The phosphorylated form in adult is expressed as gradients across the heart from endocardium (low phosphorylation) to epicardium (high phosphorylation); regulates cardiac torsion and workload distribution. Abundantly expressed in both cardiac and slow skeletal muscle. In the adult heart, the phosphorylated form is highly expressed in epicardium and weakly in endocardium.

The protein resides in the cytoplasm. It localises to the myofibril. Its subcellular location is the sarcomere. It is found in the a band. Contractile protein that plays a role in heart development and function. Following phosphorylation, plays a role in cross-bridge cycling kinetics and cardiac muscle contraction by increasing myosin lever arm stiffness and promoting myosin head diffusion; as a consequence of the increase in maximum contraction force and calcium sensitivity of contraction force. These events altogether slow down myosin kinetics and prolong duty cycle resulting in accumulated myosins being cooperatively recruited to actin binding sites to sustain thin filament activation as a means to fine-tune myofilament calcium sensitivity to force. During cardiogenesis plays an early role in cardiac contractility by promoting cardiac myofibril assembly. The sequence is that of Myosin regulatory light chain 2, ventricular/cardiac muscle isoform from Mus musculus (Mouse).